Here is a 505-residue protein sequence, read N- to C-terminus: Calcium/calmodulin-dependent protein kinase kinase 1 (505 aa).

The interval 28–66 is disordered; sequence LEEADEGPEPARNGVDPPPRARAASVIPGSASRPTPVRP. 2 positions are modified to phosphoserine: serine 67 and serine 74. Position 78 is an asymmetric dimethylarginine (arginine 78). A disordered region spans residues 84–105; it reads LGAQVGPYSTGPASHISPRSWR. Phosphoserine is present on serine 100. Threonine 108 is modified (phosphothreonine). One can recognise a Protein kinase domain in the interval 128–409; the sequence is YKLQSEIGKG…VSDIKLHPWV (282 aa). ATP-binding positions include 134–142 and lysine 157; that span reads IGKGAYGVV. Residues 167-189 are RP domain; it reads QYGFPRRPPPRGSQATQGGPAKQ. Aspartate 275 (proton acceptor) is an active-site residue. An autoinhibitory domain region spans residues 435-440; sequence KNSVRL. The interval 438 to 463 is calmodulin-binding; it reads VRLIPSWTTVILVKSMLRKRSFGNPF. Residues serine 458, serine 475, and serine 492 each carry the phosphoserine modification. The tract at residues 460–505 is disordered; the sequence is GNPFEPQARREERSMSAPGSLLMKEGCGEGCKSPELPGVQEDEAAS.

This sequence belongs to the protein kinase superfamily. Ser/Thr protein kinase family. Interacts with CAMK4 and calmodulin. Appears to be autophosphorylated in a Ca(2+)/calmodulin-dependent manner. Phosphorylated at multiple sites by PRCAKA/PKA. Phosphorylation of Ser-458 is blocked upon binding to Ca(2+)/calmodulin. In vitro, phosphorylated by CAMK1 and CAMK4. Widely expressed. Differentially expressed in various brain regions.

It localises to the cytoplasm. The protein resides in the nucleus. It carries out the reaction L-seryl-[protein] + ATP = O-phospho-L-seryl-[protein] + ADP + H(+). The catalysed reaction is L-threonyl-[protein] + ATP = O-phospho-L-threonyl-[protein] + ADP + H(+). Its activity is regulated as follows. Activated by Ca(2+)/calmodulin. Binding of calmodulin may relieve intrasteric autoinhibition. Partially inhibited upon phosphorylation by PRCAKA/PKA. May be regulated through phosphorylation by CAMK1 and CAMK4. In terms of biological role, calcium/calmodulin-dependent protein kinase that belongs to a proposed calcium-triggered signaling cascade involved in a number of cellular processes. Phosphorylates CAMK1, CAMK1D, CAMK1G and CAMK4. Involved in regulating cell apoptosis. Promotes cell survival by phosphorylating AKT1/PKB that inhibits pro-apoptotic BAD/Bcl2-antagonist of cell death. This Mus musculus (Mouse) protein is Calcium/calmodulin-dependent protein kinase kinase 1 (Camkk1).